We begin with the raw amino-acid sequence, 708 residues long: MEANHQRNDLGLVALTMLAQYHNISLNPEEIKHKFDLDGNGLSLTSWLLAAKSLALKAKHIKKEISRLHLVNLPALVWQDNGKHFLLVKVDTDNNRYLTYNLEQDAPQILSQDEFEACYQGQLILVTSRASVVGQLAKFDFTWFIPAVIKYRKIFLETLIVSIFLQIFALITPLFFQVVMDKVLVHRGFSTLNIITVALAIVIIFEIVLSGLRTYVFSHSTSRIDVELGAKLFRHLLSLPISYFENRRVGDTVARVRELDQIRNFLTGQALTSVLDLLFSFIFFAVMWYYSPKLTLVILGSLPCYILWSIFISPILRRRLDEKFARSADNQAFLVESVTAINMIKAMAVAPQMTDTWDKQLASYVSSSFRVTVLATIGQQGVQLIQKTVMVINLWLGAHLVISGDLSIGQLIAFNMLSGQVIAPVIRLAQLWQDFQQVGISVTRLGDVLNSPTEQYQGKLSLPEIQGDIAFKNIRFRYKPDAPTILNNVNLEIKKGEVIGIVGRSGSGKSTLTKLLQRFYIPENGQVLIDGHDLALADPNWLRRQIGVVLQDNVLLNRSIRENIALSEPGMSMERVIYAAKLAGAHDFISELREGYNTIVGEQGAGLSGGQRQRIAIARALVNNPKILIFDEATSALDYESEHIIMQNMQKICQGRTVILIAHRLSTVKNADRIIVMEKGEIVEQGKHHELLQNSNGLYSYLHQLQLN.

Positions 1–126 (MEANHQRNDL…ACYQGQLILV (126 aa)) constitute a Peptidase C39 domain. In terms of domain architecture, ABC transmembrane type-1 spans 155–437 (FLETLIVSIF…LAQLWQDFQQ (283 aa)). The next 5 membrane-spanning stretches (helical) occupy residues 159–179 (LIVSIFLQIFALITPLFFQVV), 192–212 (LNIITVALAIVIIFEIVLSGL), 270–290 (ALTSVLDLLFSFIFFAVMWYY), 296–316 (LVILGSLPCYILWSIFISPIL), and 389–409 (VMVINLWLGAHLVISGDLSIG). The region spanning 469-704 (IAFKNIRFRY…SNGLYSYLHQ (236 aa)) is the ABC transporter domain. Residue 503–510 (GRSGSGKS) participates in ATP binding.

The protein belongs to the ABC transporter superfamily. Protein-1 exporter (TC 3.A.1.109) family. As to quaternary structure, homodimer.

It localises to the cell inner membrane. It carries out the reaction ATP + H2O + proteinSide 1 = ADP + phosphate + proteinSide 2.. Functionally, part of the ABC transporter complex LktBD involved in leukotoxin export. Transmembrane domains (TMD) form a pore in the inner membrane and the ATP-binding domain (NBD) is responsible for energy generation. This is Leukotoxin translocation ATP-binding protein LktB (lktB) from Mannheimia glucosida.